The chain runs to 163 residues: Outer membrane protein assembly factor BamE (163 aa).

The N-terminal stretch at Met-1–Ala-22 is a signal peptide. The N-palmitoyl cysteine moiety is linked to residue Cys-23. Cys-23 carries the S-diacylglycerol cysteine lipid modification. The disordered stretch occupies residues Glu-122 to Lys-163. Residues Arg-142–Gln-153 are compositionally biased toward basic and acidic residues.

It belongs to the BamE family. In terms of assembly, part of the Bam complex.

The protein resides in the cell outer membrane. Its function is as follows. Part of the outer membrane protein assembly complex, which is involved in assembly and insertion of beta-barrel proteins into the outer membrane. The sequence is that of Outer membrane protein assembly factor BamE from Shewanella oneidensis (strain ATCC 700550 / JCM 31522 / CIP 106686 / LMG 19005 / NCIMB 14063 / MR-1).